Reading from the N-terminus, the 436-residue chain is GTPase Obg (436 aa).

Positions 1–159 constitute an Obg domain; sequence MAFVDQATIE…LKVKLELRVL (159 aa). In terms of domain architecture, OBG-type G spans 160–335; that stretch reads ADVGLVGFPS…LLLKVADLLD (176 aa). GTP is bound by residues 166 to 173, 191 to 195, 213 to 216, 285 to 288, and 316 to 318; these read GFPSAGKS, FTTID, DLPG, TKMD, and SSV. Positions 173 and 193 each coordinate Mg(2+). Positions 357 to 436 constitute an OCT domain; sequence KDDHQSTDFQ…GADFAFEFEE (80 aa).

Belongs to the TRAFAC class OBG-HflX-like GTPase superfamily. OBG GTPase family. As to quaternary structure, monomer. Mg(2+) is required as a cofactor.

The protein localises to the cytoplasm. In terms of biological role, an essential GTPase which binds GTP, GDP and possibly (p)ppGpp with moderate affinity, with high nucleotide exchange rates and a fairly low GTP hydrolysis rate. Plays a role in control of the cell cycle, stress response, ribosome biogenesis and in those bacteria that undergo differentiation, in morphogenesis control. The sequence is that of GTPase Obg from Oenococcus oeni (strain ATCC BAA-331 / PSU-1).